We begin with the raw amino-acid sequence, 114 residues long: Monothiol glutaredoxin-S8 (114 aa).

The Glutaredoxin domain occupies 1–113 (MDRVTRLASQ…PLLRDAGALW (113 aa)). Cysteine 21 contacts [2Fe-2S] cluster.

This sequence belongs to the glutaredoxin family. CC-type subfamily.

It localises to the cytoplasm. Its function is as follows. May only reduce GSH-thiol disulfides, but not protein disulfides. This Oryza sativa subsp. japonica (Rice) protein is Monothiol glutaredoxin-S8 (GRXS8).